Consider the following 306-residue polypeptide: Ribonuclease HIII (306 aa).

Residues 87–302 (WSVVGSDEVG…TKKAEALAKK (216 aa)) form the RNase H type-2 domain. A divalent metal cation is bound by residues Asp-93, Glu-94, and Asp-196.

It belongs to the RNase HII family. RnhC subfamily. Mn(2+) serves as cofactor. It depends on Mg(2+) as a cofactor.

Its subcellular location is the cytoplasm. It carries out the reaction Endonucleolytic cleavage to 5'-phosphomonoester.. In terms of biological role, endonuclease that specifically degrades the RNA of RNA-DNA hybrids. This Exiguobacterium sibiricum (strain DSM 17290 / CCUG 55495 / CIP 109462 / JCM 13490 / 255-15) protein is Ribonuclease HIII.